The sequence spans 562 residues: Glucocorticoid modulatory element-binding protein 1 (562 aa).

Alanine 2 is modified (N-acetylalanine). The SAND domain occupies 72–156 (ASSIEANEDM…RKMMDSGQID (85 aa)). Cysteine 103 lines the Zn(2+) pocket. Residues lysine 129, lysine 133, lysine 136, and arginine 147 each contribute to the DNA site. Positions 160, 164, and 168 each coordinate Zn(2+). The stretch at 311 to 357 (LDNRRKQVEHGEEQFLYTLADLERQLEEQKKQAQDPRLKSQTVQNVV) forms a coiled coil. Residues 360–384 (PVSTPKPPKRPRLQRPASTTVLSPS) form a disordered region. Residues 375 to 384 (PASTTVLSPS) show a composition bias toward polar residues.

Homodimer, and heterodimer of GMEB1 and GMEB2. Interacts with the glucocorticoid receptor (NR3C1) and NCOA2/TIF2. May interact with HSP27 and CREB-binding protein (CBP). Interacts with TRIM63.

Its subcellular location is the nucleus. It localises to the cytoplasm. Trans-acting factor that binds to glucocorticoid modulatory elements (GME) present in the TAT (tyrosine aminotransferase) promoter and increases sensitivity to low concentrations of glucocorticoids. Also binds to the transferrin receptor promoter. This Rattus norvegicus (Rat) protein is Glucocorticoid modulatory element-binding protein 1 (Gmeb1).